We begin with the raw amino-acid sequence, 437 residues long: Glutamate-1-semialdehyde 2,1-aminomutase (437 aa).

N6-(pyridoxal phosphate)lysine is present on K273.

The protein belongs to the class-III pyridoxal-phosphate-dependent aminotransferase family. HemL subfamily. In terms of assembly, homodimer. It depends on pyridoxal 5'-phosphate as a cofactor.

It is found in the cytoplasm. The catalysed reaction is (S)-4-amino-5-oxopentanoate = 5-aminolevulinate. It functions in the pathway porphyrin-containing compound metabolism; protoporphyrin-IX biosynthesis; 5-aminolevulinate from L-glutamyl-tRNA(Glu): step 2/2. This Chlamydia caviae (strain ATCC VR-813 / DSM 19441 / 03DC25 / GPIC) (Chlamydophila caviae) protein is Glutamate-1-semialdehyde 2,1-aminomutase.